Here is a 489-residue protein sequence, read N- to C-terminus: Glycogen synthase (489 aa).

Arginine 20 is a binding site for ADP-alpha-D-glucose.

Belongs to the glycosyltransferase 1 family. Bacterial/plant glycogen synthase subfamily.

It catalyses the reaction [(1-&gt;4)-alpha-D-glucosyl](n) + ADP-alpha-D-glucose = [(1-&gt;4)-alpha-D-glucosyl](n+1) + ADP + H(+). It functions in the pathway glycan biosynthesis; glycogen biosynthesis. Functionally, synthesizes alpha-1,4-glucan chains using ADP-glucose. In Chlorobium phaeobacteroides (strain DSM 266 / SMG 266 / 2430), this protein is Glycogen synthase.